Reading from the N-terminus, the 490-residue chain is Aspartyl/glutamyl-tRNA(Asn/Gln) amidotransferase subunit B (490 aa).

It belongs to the GatB/GatE family. GatB subfamily. Heterotrimer of A, B and C subunits.

It carries out the reaction L-glutamyl-tRNA(Gln) + L-glutamine + ATP + H2O = L-glutaminyl-tRNA(Gln) + L-glutamate + ADP + phosphate + H(+). It catalyses the reaction L-aspartyl-tRNA(Asn) + L-glutamine + ATP + H2O = L-asparaginyl-tRNA(Asn) + L-glutamate + ADP + phosphate + 2 H(+). Allows the formation of correctly charged Asn-tRNA(Asn) or Gln-tRNA(Gln) through the transamidation of misacylated Asp-tRNA(Asn) or Glu-tRNA(Gln) in organisms which lack either or both of asparaginyl-tRNA or glutaminyl-tRNA synthetases. The reaction takes place in the presence of glutamine and ATP through an activated phospho-Asp-tRNA(Asn) or phospho-Glu-tRNA(Gln). This Synechococcus sp. (strain JA-3-3Ab) (Cyanobacteria bacterium Yellowstone A-Prime) protein is Aspartyl/glutamyl-tRNA(Asn/Gln) amidotransferase subunit B.